The following is a 433-amino-acid chain: Arabinooligosaccharide-binding protein (433 aa).

The signal sequence occupies residues 1-21 (MKKMTVCFLVLMMLLTLVIAG). Residue C22 is the site of N-palmitoyl cysteine attachment. C22 carries S-diacylglycerol cysteine lipidation.

This sequence belongs to the bacterial solute-binding protein 1 family. In terms of assembly, the complex is composed of two ATP-binding proteins (MsmX), two transmembrane proteins (AraP and AraQ) and a solute-binding protein (AraN).

Its subcellular location is the cell membrane. Its function is as follows. Part of the ABC transporter complex AraNPQ involved in the uptake of arabinooligosaccharides. Transports alpha-1,5-arabinooligosaccharides, at least up to four L-arabinosyl units. AraN captures the substrate and delivers it to the two transmembrane components. This is Arabinooligosaccharide-binding protein from Bacillus subtilis (strain 168).